Reading from the N-terminus, the 59-residue chain is Large ribosomal subunit protein bL32 (59 aa).

The interval 1–59 (MAVQQNKKSPSKRGMHRSHDFLTTSPLAVEPSTGEVHLRHHISPNGYYRGKKVVKTKND) is disordered. The segment covering 49 to 59 (RGKKVVKTKND) has biased composition (basic residues).

The protein belongs to the bacterial ribosomal protein bL32 family.

This chain is Large ribosomal subunit protein bL32, found in Burkholderia mallei (strain NCTC 10247).